The chain runs to 415 residues: Serine hydroxymethyltransferase 2 (415 aa).

Residues L121 and 125 to 127 (GHL) each bind (6S)-5,6,7,8-tetrahydrofolate. K229 is subject to N6-(pyridoxal phosphate)lysine.

The protein belongs to the SHMT family. Homodimer. Pyridoxal 5'-phosphate serves as cofactor.

The protein localises to the cytoplasm. The enzyme catalyses (6R)-5,10-methylene-5,6,7,8-tetrahydrofolate + glycine + H2O = (6S)-5,6,7,8-tetrahydrofolate + L-serine. Its pathway is one-carbon metabolism; tetrahydrofolate interconversion. It functions in the pathway amino-acid biosynthesis; glycine biosynthesis; glycine from L-serine: step 1/1. In terms of biological role, catalyzes the reversible interconversion of serine and glycine with tetrahydrofolate (THF) serving as the one-carbon carrier. This reaction serves as the major source of one-carbon groups required for the biosynthesis of purines, thymidylate, methionine, and other important biomolecules. Also exhibits THF-independent aldolase activity toward beta-hydroxyamino acids, producing glycine and aldehydes, via a retro-aldol mechanism. The sequence is that of Serine hydroxymethyltransferase 2 from Bordetella bronchiseptica (strain ATCC BAA-588 / NCTC 13252 / RB50) (Alcaligenes bronchisepticus).